We begin with the raw amino-acid sequence, 418 residues long: Beta-arrestin-1 (418 aa).

The tract at residues 1-163 (MGDKGTRVFK…LEEKIHKRNS (163 aa)) is interaction with SRC. The interaction with CHRM2 stretch occupies residues 45–86 (PEYLKERRVYVTLTCAFRYGREDLDVLGLTFRKDLFVANVQS). Phosphotyrosine is present on Tyr-47. Positions 250, 255, 324, and 326 each coordinate 1D-myo-inositol hexakisphosphate. Residues 318 to 418 (IVSYKVKVKL…GTGSPHLNNR (101 aa)) are interaction with TRAF6. Disordered regions lie at residues 353–375 (HPKP…VDTN) and 397–418 (KGMK…LNNR). A compositionally biased stretch (basic and acidic residues) spans 355 to 366 (KPKEEPPHREVP). Residue Ser-412 is modified to Phosphoserine.

This sequence belongs to the arrestin family. In terms of assembly, monomer. Homodimer. Homooligomer; the self-association is mediated by InsP6-binding. Heterooligomer with ARRB2; the association is mediated by InsP6-binding. Interacts with ADRB2 (phosphorylated). Interacts with CHRM2 (phosphorylated). Interacts with LHCGR. Interacts with CYTH2 and CASR. Interacts with AP2B1 (dephosphorylated); phosphorylation of AP2B1 disrupts the interaction. Interacts (dephosphorylated at Ser-412) with CLTC. Interacts with CCR2 and GRK2. Interacts with CRR5. Interacts with PTAFR (phosphorylated on serine residues). Interacts with CLTC and MAP2K3. Interacts with CREB1. Interacts with TRAF6. Interacts with IGF1R and MDM2. Interacts with C5AR1. Interacts with PDE4D. Interacts with SRC (via the SH3 domain and the protein kinase domain); the interaction is independent of the phosphorylation state of SRC C-terminus. Interacts with TACR1. Interacts with RAF1. Interacts with DVL1; the interaction is enhanced by phosphorylation of DVL1. Interacts with DVL2; the interaction is enhanced by phosphorylation of DVL2. Interacts with IGF1R. Interacts with CHUK, IKBKB and MAP3K14. Associates with MAP kinase p38. Part of a MAPK signaling complex consisting of TACR1, ARRB1, SRC, MAPK1 (activated) and MAPK3 (activated). Part of a MAPK signaling complex consisting of F2RL1, ARRB1, RAF1, MAPK1 (activated) and MAPK3 (activated). Interacts with GPR143. Interacts with MAP2K4/MKK4. Interacts with HCK and CXCR1 (phosphorylated). Interacts with ACKR3 and ACKR4. Interacts with ARRDC1; the interaction is direct. Interacts with GPR61, GPR62 and GPR135. In terms of processing, constitutively phosphorylated at in the cytoplasm. At the plasma membrane, is rapidly dephosphorylated, a process that is required for clathrin binding and ADRB2 endocytosis but not for ADRB2 binding and desensitization. Once internalized, is rephosphorylated. Post-translationally, the ubiquitination status appears to regulate the formation and trafficking of beta-arrestin-GPCR complexes and signaling. Ubiquitination appears to occur GPCR-specific. Ubiquitinated by MDM2; the ubiquitination is required for rapid internalization of ADRB2. Deubiquitinated by USP33; the deubiquitination leads to a dissociation of the beta-arrestin-GPCR complex. Stimulation of a class A GPCR, such as ADRB2, induces transient ubiquitination and subsequently promotes association with USP33.

The protein resides in the cytoplasm. It is found in the nucleus. The protein localises to the cell membrane. It localises to the membrane. Its subcellular location is the clathrin-coated pit. The protein resides in the cell projection. It is found in the pseudopodium. The protein localises to the cytoplasmic vesicle. In terms of biological role, functions in regulating agonist-mediated G-protein coupled receptor (GPCR) signaling by mediating both receptor desensitization and resensitization processes. During homologous desensitization, beta-arrestins bind to the GPRK-phosphorylated receptor and sterically preclude its coupling to the cognate G-protein; the binding appears to require additional receptor determinants exposed only in the active receptor conformation. The beta-arrestins target many receptors for internalization by acting as endocytic adapters (CLASPs, clathrin-associated sorting proteins) and recruiting the GPRCs to the adapter protein 2 complex 2 (AP-2) in clathrin-coated pits (CCPs). However, the extent of beta-arrestin involvement appears to vary significantly depending on the receptor, agonist and cell type. Internalized arrestin-receptor complexes traffic to intracellular endosomes, where they remain uncoupled from G-proteins. Two different modes of arrestin-mediated internalization occur. Class A receptors, like ADRB2, OPRM1, ENDRA, D1AR and ADRA1B dissociate from beta-arrestin at or near the plasma membrane and undergo rapid recycling. Class B receptors, like AVPR2, AGTR1, NTSR1, TRHR and TACR1 internalize as a complex with arrestin and traffic with it to endosomal vesicles, presumably as desensitized receptors, for extended periods of time. Receptor resensitization then requires that receptor-bound arrestin is removed so that the receptor can be dephosphorylated and returned to the plasma membrane. Involved in internalization of P2RY4 and UTP-stimulated internalization of P2RY2. Involved in phosphorylation-dependent internalization of OPRD1 ands subsequent recycling. Involved in the degradation of cAMP by recruiting cAMP phosphodiesterases to ligand-activated receptors. Beta-arrestins function as multivalent adapter proteins that can switch the GPCR from a G-protein signaling mode that transmits short-lived signals from the plasma membrane via small molecule second messengers and ion channels to a beta-arrestin signaling mode that transmits a distinct set of signals that are initiated as the receptor internalizes and transits the intracellular compartment. Acts as a signaling scaffold for MAPK pathways such as MAPK1/3 (ERK1/2). ERK1/2 activated by the beta-arrestin scaffold is largely excluded from the nucleus and confined to cytoplasmic locations such as endocytic vesicles, also called beta-arrestin signalosomes. Recruits c-Src/SRC to ADRB2 resulting in ERK activation. GPCRs for which the beta-arrestin-mediated signaling relies on both ARRB1 and ARRB2 (codependent regulation) include ADRB2, F2RL1 and PTH1R. For some GPCRs the beta-arrestin-mediated signaling relies on either ARRB1 or ARRB2 and is inhibited by the other respective beta-arrestin form (reciprocal regulation). Inhibits ERK1/2 signaling in AGTR1- and AVPR2-mediated activation (reciprocal regulation). Is required for SP-stimulated endocytosis of NK1R and recruits c-Src/SRC to internalized NK1R resulting in ERK1/2 activation, which is required for the antiapoptotic effects of SP. Is involved in proteinase-activated F2RL1-mediated ERK activity. Acts as a signaling scaffold for the AKT1 pathway. Is involved in alpha-thrombin-stimulated AKT1 signaling. Is involved in IGF1-stimulated AKT1 signaling leading to increased protection from apoptosis. Involved in activation of the p38 MAPK signaling pathway and in actin bundle formation. Involved in F2RL1-mediated cytoskeletal rearrangement and chemotaxis. Involved in AGTR1-mediated stress fiber formation by acting together with GNAQ to activate RHOA. Appears to function as signaling scaffold involved in regulation of MIP-1-beta-stimulated CCR5-dependent chemotaxis. Involved in attenuation of NF-kappa-B-dependent transcription in response to GPCR or cytokine stimulation by interacting with and stabilizing CHUK. May serve as nuclear messenger for GPCRs. Involved in OPRD1-stimulated transcriptional regulation by translocating to CDKN1B and FOS promoter regions and recruiting EP300 resulting in acetylation of histone H4. Involved in regulation of LEF1 transcriptional activity via interaction with DVL1 and/or DVL2 Also involved in regulation of receptors other than GPCRs. Involved in Toll-like receptor and IL-1 receptor signaling through the interaction with TRAF6 which prevents TRAF6 autoubiquitination and oligomerization required for activation of NF-kappa-B and JUN. Involved in IL8-mediated granule release in neutrophils. Binds phosphoinositides. Binds inositolhexakisphosphate (InsP6). Required for atypical chemokine receptor ACKR2-induced RAC1-LIMK1-PAK1-dependent phosphorylation of cofilin (CFL1) and for the up-regulation of ACKR2 from endosomal compartment to cell membrane, increasing its efficiency in chemokine uptake and degradation. Involved in the internalization of the atypical chemokine receptor ACKR3. Negatively regulates the NOTCH signaling pathway by mediating the ubiquitination and degradation of NOTCH1 by ITCH. Participates in the recruitment of the ubiquitin-protein ligase to the receptor. This Mus musculus (Mouse) protein is Beta-arrestin-1 (Arrb1).